Consider the following 126-residue polypeptide: Glycine cleavage system H protein (126 aa).

Residues 22-104 (VVFIGITDYA…YGAGWIIKVK (83 aa)) form the Lipoyl-binding domain. An N6-lipoyllysine modification is found at K63.

The protein belongs to the GcvH family. The glycine cleavage system is composed of four proteins: P, T, L and H. It depends on (R)-lipoate as a cofactor.

Functionally, the glycine cleavage system catalyzes the degradation of glycine. The H protein shuttles the methylamine group of glycine from the P protein to the T protein. This chain is Glycine cleavage system H protein, found in Porphyromonas gingivalis (strain ATCC 33277 / DSM 20709 / CIP 103683 / JCM 12257 / NCTC 11834 / 2561).